The following is a 332-amino-acid chain: tRNA-dihydrouridine synthase B (332 aa).

FMN is bound by residues 16–18 (PMA) and glutamine 70. Cysteine 100 serves as the catalytic Proton donor. FMN-binding positions include lysine 139, 200 to 202 (NGD), and 224 to 225 (GR).

This sequence belongs to the Dus family. DusB subfamily. The cofactor is FMN.

The catalysed reaction is a 5,6-dihydrouridine in tRNA + NAD(+) = a uridine in tRNA + NADH + H(+). The enzyme catalyses a 5,6-dihydrouridine in tRNA + NADP(+) = a uridine in tRNA + NADPH + H(+). In terms of biological role, catalyzes the synthesis of 5,6-dihydrouridine (D), a modified base found in the D-loop of most tRNAs, via the reduction of the C5-C6 double bond in target uridines. In Xanthomonas campestris pv. campestris (strain ATCC 33913 / DSM 3586 / NCPPB 528 / LMG 568 / P 25), this protein is tRNA-dihydrouridine synthase B.